We begin with the raw amino-acid sequence, 264 residues long: 3-methyl-2-oxobutanoate hydroxymethyltransferase (264 aa).

Mg(2+) is bound by residues Asp-45 and Asp-84. Residues 45–46 (DS), Asp-84, and Lys-112 contribute to the 3-methyl-2-oxobutanoate site. Glu-114 contacts Mg(2+). The active-site Proton acceptor is Glu-181.

Belongs to the PanB family. Homodecamer; pentamer of dimers. Mg(2+) serves as cofactor.

Its subcellular location is the cytoplasm. It carries out the reaction 3-methyl-2-oxobutanoate + (6R)-5,10-methylene-5,6,7,8-tetrahydrofolate + H2O = 2-dehydropantoate + (6S)-5,6,7,8-tetrahydrofolate. It participates in cofactor biosynthesis; (R)-pantothenate biosynthesis; (R)-pantoate from 3-methyl-2-oxobutanoate: step 1/2. In terms of biological role, catalyzes the reversible reaction in which hydroxymethyl group from 5,10-methylenetetrahydrofolate is transferred onto alpha-ketoisovalerate to form ketopantoate. This Escherichia coli O7:K1 (strain IAI39 / ExPEC) protein is 3-methyl-2-oxobutanoate hydroxymethyltransferase.